Consider the following 220-residue polypeptide: Uracil-DNA glycosylase (220 aa).

Asp-65 (proton acceptor) is an active-site residue.

This sequence belongs to the uracil-DNA glycosylase (UDG) superfamily. UNG family.

It is found in the cytoplasm. It catalyses the reaction Hydrolyzes single-stranded DNA or mismatched double-stranded DNA and polynucleotides, releasing free uracil.. Excises uracil residues from the DNA which can arise as a result of misincorporation of dUMP residues by DNA polymerase or due to deamination of cytosine. In Azobacteroides pseudotrichonymphae genomovar. CFP2, this protein is Uracil-DNA glycosylase.